Here is a 310-residue protein sequence, read N- to C-terminus: Leucine carboxyl methyltransferase 1 (310 aa).

S-adenosyl-L-methionine contacts are provided by residues Arg50, Gly75, Asp100, 145–146 (DI), and Glu169.

The protein belongs to the methyltransferase superfamily. LCMT family.

The enzyme catalyses [phosphatase 2A protein]-C-terminal L-leucine + S-adenosyl-L-methionine = [phosphatase 2A protein]-C-terminal L-leucine methyl ester + S-adenosyl-L-homocysteine. Its function is as follows. Methylates the carboxyl group of the C-terminal leucine residue of protein phosphatase 2A catalytic subunits to form alpha-leucine ester residues. The sequence is that of Leucine carboxyl methyltransferase 1 (ppm1) from Schizosaccharomyces pombe (strain 972 / ATCC 24843) (Fission yeast).